We begin with the raw amino-acid sequence, 112 residues long: PTS system lactose-specific EIIA component (112 aa).

One can recognise a PTS EIIA type-3 domain in the interval 6–104 (EEISMVGFAL…TRYMIRMFKR (99 aa)). His-80 functions as the Tele-phosphohistidine intermediate in the catalytic mechanism. Residue His-80 is modified to Phosphohistidine; by HPr. Mg(2+) is bound at residue Asp-83.

In terms of assembly, homotrimer. Requires Mg(2+) as cofactor.

It is found in the cytoplasm. Functionally, the phosphoenolpyruvate-dependent sugar phosphotransferase system (sugar PTS), a major carbohydrate active transport system, catalyzes the phosphorylation of incoming sugar substrates concomitantly with their translocation across the cell membrane. The enzyme II LacEF PTS system is involved in lactose transport. This is PTS system lactose-specific EIIA component from Lacticaseibacillus casei (Lactobacillus casei).